The following is a 318-amino-acid chain: DNA primase small subunit PriS (318 aa).

Catalysis depends on residues D95, D97, and D224.

Belongs to the eukaryotic-type primase small subunit family. In terms of assembly, heterodimer of a small subunit (PriS) and a large subunit (PriL). Requires Mg(2+) as cofactor. Mn(2+) is required as a cofactor.

Catalytic subunit of DNA primase, an RNA polymerase that catalyzes the synthesis of short RNA molecules used as primers for DNA polymerase during DNA replication. The small subunit contains the primase catalytic core and has DNA synthesis activity on its own. Binding to the large subunit stabilizes and modulates the activity, increasing the rate of DNA synthesis while decreasing the length of the DNA fragments, and conferring RNA synthesis capability. The DNA polymerase activity may enable DNA primase to also catalyze primer extension after primer synthesis. May also play a role in DNA repair. This chain is DNA primase small subunit PriS, found in Sulfurisphaera tokodaii (strain DSM 16993 / JCM 10545 / NBRC 100140 / 7) (Sulfolobus tokodaii).